The sequence spans 478 residues: tRNA(Ile)-lysidine synthase (478 aa).

An ATP-binding site is contributed by 27-32; it reads SGGSDS.

It belongs to the tRNA(Ile)-lysidine synthase family.

Its subcellular location is the cytoplasm. It catalyses the reaction cytidine(34) in tRNA(Ile2) + L-lysine + ATP = lysidine(34) in tRNA(Ile2) + AMP + diphosphate + H(+). Its function is as follows. Ligates lysine onto the cytidine present at position 34 of the AUA codon-specific tRNA(Ile) that contains the anticodon CAU, in an ATP-dependent manner. Cytidine is converted to lysidine, thus changing the amino acid specificity of the tRNA from methionine to isoleucine. This chain is tRNA(Ile)-lysidine synthase, found in Rickettsia africae (strain ESF-5).